A 354-amino-acid polypeptide reads, in one-letter code: Sphingosine-1-phosphate phosphatase 2 (354 aa).

The next 4 helical transmembrane spans lie at tyrosine 43–phenylalanine 63, leucine 76–tryptophan 96, tyrosine 115–serine 135, and tyrosine 140–leucine 160. The tract at residues lysine 91 to proline 99 is phosphatase sequence motif I. Residues proline 118–histidine 121 form a phosphatase sequence motif II region. Catalysis depends on histidine 121, which acts as the Proton donor. The phosphatase sequence motif III stretch occupies residues serine 161–aspartate 172. Histidine 168 (nucleophile) is an active-site residue. The next 5 helical transmembrane spans lie at isoleucine 173–leucine 193, proline 202–serine 222, isoleucine 235–valine 255, threonine 273–valine 293, and threonine 334–leucine 354.

The protein belongs to the type 2 lipid phosphate phosphatase family. In terms of tissue distribution, highly expressed in pancreatic islets. Expressed in lung, small interstince, colon, kideny and brain.

Its subcellular location is the endoplasmic reticulum membrane. The enzyme catalyses sphinganine 1-phosphate + H2O = sphinganine + phosphate. It carries out the reaction sphing-4-enine 1-phosphate + H2O = sphing-4-enine + phosphate. It catalyses the reaction (4R)-hydroxysphinganine 1-phosphate + H2O = (4R)-hydroxysphinganine + phosphate. Functionally, has specific phosphohydrolase activity towards sphingoid base 1-phosphates. Has high phosphohydrolase activity against dihydrosphingosine-1-phosphate and sphingosine-1-phosphate (S1P) in vitro. Sphingosine-1-phosphate phosphatase activity is needed for efficient recycling of sphingosine into the sphingolipid synthesis pathway. May play a role in attenuating intracellular sphingosine 1-phosphate (S1P) signaling. May play a role in pro-inflammatory signaling. Plays a role in the regulation of pancreatic islet beta-cell endoplasmic reticulum stress and proliferation. This chain is Sphingosine-1-phosphate phosphatase 2, found in Mus musculus (Mouse).